The following is a 95-amino-acid chain: Progonadoliberin-1 (95 aa).

Residues 1 to 22 (MAPQTFALWLLLVGTLLGQGCC) form the signal peptide. A Pyrrolidone carboxylic acid modification is found at Q23. At G32 the chain carries Glycine amide.

It belongs to the GnRH family.

It localises to the secreted. In terms of biological role, stimulates the secretion of gonadotropins. The protein is Progonadoliberin-1 (gnrh1) of Morone saxatilis (Striped bass).